Reading from the N-terminus, the 445-residue chain is F-box protein At5g10340 (445 aa).

In terms of domain architecture, F-box spans 64-112 (SMEELLPHDVIEYHIMVRLDVKTLLKFKSVSKQWMSTIQSPSFQERQLI).

In Arabidopsis thaliana (Mouse-ear cress), this protein is F-box protein At5g10340.